A 187-amino-acid chain; its full sequence is Ribosome-recycling factor (187 aa).

It belongs to the RRF family.

The protein resides in the cytoplasm. In terms of biological role, responsible for the release of ribosomes from messenger RNA at the termination of protein biosynthesis. May increase the efficiency of translation by recycling ribosomes from one round of translation to another. This is Ribosome-recycling factor from Methylobacterium sp. (strain 4-46).